The primary structure comprises 901 residues: HTH-type transcriptional regulator MalT (901 aa).

39–46 is an ATP binding site; that stretch reads SPAGYGKT. The HTH luxR-type domain maps to 829-894; it reads ELIRTSPLTQ…DAVQHAQQLL (66 aa). Positions 853 to 872 form a DNA-binding region, H-T-H motif; that stretch reads NEQIAGELDVAATTIKTHIR.

Belongs to the MalT family. Monomer in solution. Oligomerizes to an active state in the presence of the positive effectors ATP and maltotriose.

Its activity is regulated as follows. Activated by ATP and maltotriose, which are both required for DNA binding. Its function is as follows. Positively regulates the transcription of the maltose regulon whose gene products are responsible for uptake and catabolism of malto-oligosaccharides. Specifically binds to the promoter region of its target genes, recognizing a short DNA motif called the MalT box. This Klebsiella pneumoniae subsp. pneumoniae (strain ATCC 700721 / MGH 78578) protein is HTH-type transcriptional regulator MalT.